The sequence spans 123 residues: PTS system glucitol/sorbitol-specific EIIA component (123 aa).

Positions 3 to 116 (VIYQTTITRI…PDDIAPGSVL (114 aa)) constitute a PTS EIIA type-5 domain. The Tele-phosphohistidine intermediate role is filled by H43. H43 bears the Phosphohistidine; by HPr mark.

It localises to the cytoplasm. In terms of biological role, the phosphoenolpyruvate-dependent sugar phosphotransferase system (sugar PTS), a major carbohydrate active transport system, catalyzes the phosphorylation of incoming sugar substrates concomitantly with their translocation across the cell membrane. The enzyme II complex composed of SrlA, SrlB and SrlE is involved in glucitol/sorbitol transport. It can also use D-mannitol. The sequence is that of PTS system glucitol/sorbitol-specific EIIA component (srlB) from Escherichia coli (strain K12).